The sequence spans 256 residues: Hydroxyacylglutathione hydrolase (256 aa).

7 residues coordinate Zn(2+): H57, H59, D61, H62, H115, D134, and H172.

Belongs to the metallo-beta-lactamase superfamily. Glyoxalase II family. As to quaternary structure, monomer. Zn(2+) serves as cofactor.

The enzyme catalyses an S-(2-hydroxyacyl)glutathione + H2O = a 2-hydroxy carboxylate + glutathione + H(+). The protein operates within secondary metabolite metabolism; methylglyoxal degradation; (R)-lactate from methylglyoxal: step 2/2. Functionally, thiolesterase that catalyzes the hydrolysis of S-D-lactoyl-glutathione to form glutathione and D-lactic acid. This chain is Hydroxyacylglutathione hydrolase, found in Rhizobium johnstonii (strain DSM 114642 / LMG 32736 / 3841) (Rhizobium leguminosarum bv. viciae).